We begin with the raw amino-acid sequence, 343 residues long: tRNA N6-adenosine threonylcarbamoyltransferase (343 aa).

Residues histidine 111 and histidine 115 each coordinate Fe cation. Substrate is bound by residues 134-138 (LVSGG), aspartate 167, glycine 180, and asparagine 276. Aspartate 304 is a Fe cation binding site.

This sequence belongs to the KAE1 / TsaD family. Requires Fe(2+) as cofactor.

The protein localises to the cytoplasm. It catalyses the reaction L-threonylcarbamoyladenylate + adenosine(37) in tRNA = N(6)-L-threonylcarbamoyladenosine(37) in tRNA + AMP + H(+). Required for the formation of a threonylcarbamoyl group on adenosine at position 37 (t(6)A37) in tRNAs that read codons beginning with adenine. Is involved in the transfer of the threonylcarbamoyl moiety of threonylcarbamoyl-AMP (TC-AMP) to the N6 group of A37, together with TsaE and TsaB. TsaD likely plays a direct catalytic role in this reaction. This Chromohalobacter salexigens (strain ATCC BAA-138 / DSM 3043 / CIP 106854 / NCIMB 13768 / 1H11) protein is tRNA N6-adenosine threonylcarbamoyltransferase.